Here is a 304-residue protein sequence, read N- to C-terminus: Olfactory receptor 4K13 (304 aa).

The Extracellular segment spans residues 1-25 (MERANHSVVSEFILLGLSKSQNLQI). Asn5 carries an N-linked (GlcNAc...) asparagine glycan. Residues 26–49 (LFFLGFSVVFVGIVLGNLLILVTV) traverse the membrane as a helical segment. Over 50 to 57 (TFDSLLHT) the chain is Cytoplasmic. Residues 58–79 (PMYFLLSNLSCIDMILASFATP) traverse the membrane as a helical segment. The Extracellular segment spans residues 80 to 100 (KMIVDFLRERKTISWWGCYSQ). The cysteines at positions 97 and 189 are disulfide-linked. Residues 101–120 (MFFMHLLGGSEMMLLVAMAI) form a helical membrane-spanning segment. Topologically, residues 121 to 139 (DRYVAICKPLHYMTIMSPR) are cytoplasmic. Residues 140–158 (VLTGLLLSSYAVGFVHSSS) traverse the membrane as a helical segment. The Extracellular portion of the chain corresponds to 159–195 (QMAFMLTLPFCGPNVIDSFFCDLPLVIKLACKDTYIL). A helical membrane pass occupies residues 196–219 (QLLVIADSGLLSLVCFLLLLVSYG). The Cytoplasmic segment spans residues 220-235 (VIIFSVRYRAASRSSK). A helical transmembrane segment spans residues 236–258 (AFSTLSAHITVVTLFFAPCVFIY). Over 259–269 (VWPFSRYSVDK) the chain is Extracellular. Residues 270 to 289 (ILSVFYTIFTPLLNPIIYTL) form a helical membrane-spanning segment. Residues 290 to 304 (RNQEVKAAIKKRLCI) lie on the Cytoplasmic side of the membrane.

It belongs to the G-protein coupled receptor 1 family.

It localises to the cell membrane. Its function is as follows. Odorant receptor. This chain is Olfactory receptor 4K13 (OR4K13), found in Homo sapiens (Human).